The sequence spans 221 residues: F-box protein At1g55000 (221 aa).

Residues 7 to 46 (DTLIIIFQKLTVADLARASCVCKVWNSVATEDDLVVSAFT) enclose the F-box domain. The region spanning 74–118 (ISHRICRGDSVTSLAVKYAVQVMDIKRLNNMMSDHGIYSRDRLLI) is the LysM domain.

Part of a SCF (ASK-cullin-F-box) protein ligase complex. Interacts with SKP1A/ASK1, SKP1B/ASK2, ASK4, ASK11 and ASK13.

The protein operates within protein modification; protein ubiquitination. Component of SCF(ASK-cullin-F-box) E3 ubiquitin ligase complexes, which may mediate the ubiquitination and subsequent proteasomal degradation of target proteins. In Arabidopsis thaliana (Mouse-ear cress), this protein is F-box protein At1g55000.